The chain runs to 372 residues: NAD(P)H-quinone oxidoreductase subunit 1 (372 aa).

8 consecutive transmembrane segments (helical) span residues 31–51 (PLPM…VVWL), 65–85 (PEFI…KLVL), 97–117 (LLFT…YLIL), 128–148 (VGLG…GLLM), 176–196 (LALS…VDIV), 254–276 (FALF…AVLY), 304–324 (LIFA…LIFL), and 347–367 (FLLP…LAFP).

It belongs to the complex I subunit 1 family. As to quaternary structure, NDH-1 is composed of at least 11 different subunits.

The protein localises to the cellular thylakoid membrane. The enzyme catalyses a plastoquinone + NADH + (n+1) H(+)(in) = a plastoquinol + NAD(+) + n H(+)(out). The catalysed reaction is a plastoquinone + NADPH + (n+1) H(+)(in) = a plastoquinol + NADP(+) + n H(+)(out). Functionally, NDH-1 shuttles electrons from an unknown electron donor, via FMN and iron-sulfur (Fe-S) centers, to quinones in the respiratory and/or the photosynthetic chain. The immediate electron acceptor for the enzyme in this species is believed to be plastoquinone. Couples the redox reaction to proton translocation, and thus conserves the redox energy in a proton gradient. The polypeptide is NAD(P)H-quinone oxidoreductase subunit 1 (Leptolyngbya boryana (Plectonema boryanum)).